A 531-amino-acid polypeptide reads, in one-letter code: Tyrosine 2,3-aminomutase (531 aa).

Residue tyrosine 51 is the Proton donor/acceptor of the active site. Residue histidine 81 coordinates substrate. The segment at residues 140 to 142 (ASG) is a cross-link (5-imidazolinone (Ala-Gly)). Serine 141 carries the post-translational modification 2,3-didehydroalanine (Ser). Residues asparagine 193 and arginine 298 each coordinate substrate.

It belongs to the TAL/TAM family. As to quaternary structure, homotetramer; dimer of dimers. In terms of processing, contains an active site 4-methylidene-imidazol-5-one (MIO), which is formed autocatalytically by cyclization and dehydration of residues Ala-Ser-Gly.

The enzyme catalyses L-tyrosine = 3-amino-3-(4-hydroxyphenyl)propanoate. It carries out the reaction L-tyrosine = (E)-4-coumarate + NH4(+). Has aminomutase and, to a lesser extent, ammonia-lyase activity. Primarily, catalyzes the rearrangement of L-tyrosine to R-beta-tyrosine, which is incorporated into secondary metabolites called chondramides. The aminomutase activity mainly produces R-beta-tyrosine but also S-beta tyrosine in smaller amounts. Does not accept D-tyrosine, L-histidine or L-phenylalanine as substrates. The sequence is that of Tyrosine 2,3-aminomutase from Chondromyces crocatus.